Reading from the N-terminus, the 122-residue chain is MPTIQQLVRKGRHDKSAKVATAALKGSPQRRGVCTRVYTTTPKKPNSALRKVARVRLTSGIEVSAYIPGEGHNLQEHSMVLVRGGRVKDLPGVRYKIVRGALDTQGVKDRKQARSRYGAKRG.

Residue D89 is modified to 3-methylthioaspartic acid.

This sequence belongs to the universal ribosomal protein uS12 family. Part of the 30S ribosomal subunit. Contacts proteins S8 and S17. May interact with IF1 in the 30S initiation complex.

Functionally, with S4 and S5 plays an important role in translational accuracy. In terms of biological role, interacts with and stabilizes bases of the 16S rRNA that are involved in tRNA selection in the A site and with the mRNA backbone. Located at the interface of the 30S and 50S subunits, it traverses the body of the 30S subunit contacting proteins on the other side and probably holding the rRNA structure together. The combined cluster of proteins S8, S12 and S17 appears to hold together the shoulder and platform of the 30S subunit. This Corynebacterium glutamicum (strain R) protein is Small ribosomal subunit protein uS12.